A 769-amino-acid chain; its full sequence is Integrin beta-2 (769 aa).

A signal peptide spans 1–22 (MLCRCSPLLLLVGLLTLRSALS). Pyrrolidone carboxylic acid is present on Gln-23. At 23 to 700 (QECAKYKVST…ETRECVKGPN (678 aa)) the chain is on the extracellular side. The PSI domain occupies 24 to 74 (ECAKYKVSTCRDCIESGPGCAWCQKLNFSGQGEPDSVRCDTREQLLAKGCV). Intrachain disulfides connect Cys-25–Cys-43, Cys-33–Cys-447, Cys-36–Cys-62, Cys-46–Cys-73, Cys-191–Cys-198, Cys-246–Cys-286, Cys-386–Cys-400, Cys-420–Cys-445, Cys-449–Cys-467, Cys-459–Cys-470, Cys-472–Cys-481, Cys-483–Cys-514, Cys-497–Cys-512, Cys-506–Cys-517, Cys-519–Cys-534, Cys-536–Cys-559, Cys-541–Cys-557, Cys-549–Cys-562, Cys-564–Cys-573, Cys-575–Cys-598, Cys-582–Cys-596, Cys-590–Cys-601, Cys-603–Cys-612, Cys-615–Cys-618, Cys-622–Cys-662, Cys-628–Cys-647, Cys-631–Cys-643, and Cys-670–Cys-695. Residues Asn-50 and Asn-116 are each glycosylated (N-linked (GlcNAc...) asparagine). Positions 124 to 363 (GYPIDLYYLM…ELIKNAYNKL (240 aa)) constitute a VWFA domain. Mg(2+) is bound by residues Ser-136 and Ser-138. Residues Ser-138, Asp-141, Asp-142, and Asp-173 each contribute to the Ca(2+) site. Ca(2+)-binding residues include Asn-229, Asp-231, Pro-233, and Glu-234. Glu-234 serves as a coordination point for Mg(2+). An N-linked (GlcNAc...) asparagine glycan is attached at Asn-254. Positions 264 and 347 each coordinate Ca(2+). The Cell attachment site signature appears at 397–399 (RGD). 4 consecutive I-EGF domains span residues 449–482 (CGDS…KHCE), 483–535 (CQTQ…QFCE), 536–574 (CDNM…SACQ), and 575–613 (CLKS…PLCT). The N-linked (GlcNAc...) asparagine glycan is linked to Asn-501. N-linked (GlcNAc...) asparagine glycosylation occurs at Asn-642. Residues 701-723 (IAAIVGGTVGGVVLVGIFLLVIW) form a helical membrane-spanning segment. At 724-769 (KVLTHLSDLREYKRFEKEKLKSQWNNDNPLFKSATTTVMNPKFAER) the chain is on the cytoplasmic side. Ser-745 and Ser-756 each carry phosphoserine. Residues Thr-758 and Thr-760 each carry the phosphothreonine modification.

It belongs to the integrin beta chain family. In terms of assembly, heterodimer of an alpha and a beta subunit. The ITGB2 beta subunit associates with the ITGAL, ITGAM, ITGAX or ITGAD alpha subunits. Found in a complex with CD177 and ITGAM/CD11b. Interacts with FGR. Interacts with COPS5 and RANBP9. Interacts with FLNA (via filamin repeats 4, 9, 12, 17, 19, 21, and 23). Interacts with THBD. Both Ser-745 and Ser-756 become phosphorylated when T-cells are exposed to phorbol esters. Phosphorylation on Thr-758 (but not on Ser-756) allows interaction with 14-3-3 proteins.

The protein localises to the cell membrane. The protein resides in the membrane raft. Integrin ITGAL/ITGB2 is a receptor for ICAM1, ICAM2, ICAM3 and ICAM4. Integrin ITGAL/ITGB2 is also a receptor for the secreted form of ubiquitin-like protein ISG15; the interaction is mediated by ITGAL. Integrins ITGAM/ITGB2 and ITGAX/ITGB2 are receptors for the iC3b fragment of the third complement component and for fibrinogen. Integrin ITGAX/ITGB2 recognizes the sequence G-P-R in fibrinogen alpha-chain. Integrin ITGAM/ITGB2 recognizes P1 and P2 peptides of fibrinogen gamma chain. Integrin ITGAM/ITGB2 is also a receptor for factor X. Integrin ITGAD/ITGB2 is a receptor for ICAM3 and VCAM1. Contributes to natural killer cell cytotoxicity. Involved in leukocyte adhesion and transmigration of leukocytes including T-cells and neutrophils. Triggers neutrophil transmigration during lung injury through PTK2B/PYK2-mediated activation. Integrin alpha-L/beta-2 in association with ICAM3, contributes to apoptotic neutrophil phagocytosis by macrophages. The sequence is that of Integrin beta-2 (ITGB2) from Sus scrofa (Pig).